The sequence spans 121 residues: Ig heavy chain V region MPC 11 (121 aa).

Residues 1-112 (EAQLQQSGAE…NSSPYFDSWG (112 aa)) form the Ig-like domain.

The polypeptide is Ig heavy chain V region MPC 11 (Mus musculus (Mouse)).